The primary structure comprises 559 residues: Terpene synthase 1 (559 aa).

Residues Asp-312, Asp-316, Asp-456, and Glu-464 each coordinate Mg(2+). The DDXXD motif signature appears at 312–316 (DDLYD).

This sequence belongs to the terpene synthase family. Tpsa subfamily. Requires Mg(2+) as cofactor. Mn(2+) is required as a cofactor. In terms of tissue distribution, mostly expressed in stems and, to a lower extent, in leaves, roots and fruits.

It catalyses the reaction (2E,6E)-farnesyl diphosphate = (-)-(E)-beta-caryophyllene + diphosphate. The catalysed reaction is (2E,6E)-farnesyl diphosphate = alpha-humulene + diphosphate. It functions in the pathway secondary metabolite biosynthesis; terpenoid biosynthesis. Sesquiterpene synthase involved in the biosynthesis of volatile compounds that contribute to the characteristic flavors of black pepper. Mediates the conversion of (2E,6E)-farnesyl diphosphate (FPP) into beta-caryophyllene and, as a minor compound, into alpha-humulene. This chain is Terpene synthase 1, found in Piper nigrum (Black pepper).